The following is a 258-amino-acid chain: Shikimate dehydrogenase (NADP(+)) (258 aa).

Shikimate contacts are provided by residues Ser14–Ser16 and Thr61. Lys65 (proton acceptor) is an active-site residue. Positions 86 and 101 each coordinate shikimate. Residues Gly125–Ser129 and Leu211 contribute to the NADP(+) site. Tyr213 is a shikimate binding site. An NADP(+)-binding site is contributed by Gly234.

It belongs to the shikimate dehydrogenase family. Homodimer.

The enzyme catalyses shikimate + NADP(+) = 3-dehydroshikimate + NADPH + H(+). It participates in metabolic intermediate biosynthesis; chorismate biosynthesis; chorismate from D-erythrose 4-phosphate and phosphoenolpyruvate: step 4/7. Involved in the biosynthesis of the chorismate, which leads to the biosynthesis of aromatic amino acids. Catalyzes the reversible NADPH linked reduction of 3-dehydroshikimate (DHSA) to yield shikimate (SA). This is Shikimate dehydrogenase (NADP(+)) from Clostridium botulinum (strain Loch Maree / Type A3).